A 91-amino-acid chain; its full sequence is Acylphosphatase (91 aa).

The Acylphosphatase-like domain occupies 5-91; sequence RAHLRIYGRV…EGLEGFKVVG (87 aa). Residues Arg20 and Asn38 contribute to the active site.

This sequence belongs to the acylphosphatase family.

It catalyses the reaction an acyl phosphate + H2O = a carboxylate + phosphate + H(+). This chain is Acylphosphatase (acyP), found in Thermococcus kodakarensis (strain ATCC BAA-918 / JCM 12380 / KOD1) (Pyrococcus kodakaraensis (strain KOD1)).